The chain runs to 347 residues: Major capsid protein (347 aa).

The protein belongs to the baculoviridae major capsid protein family.

The protein localises to the virion. Its function is as follows. Most abundant structural protein of the nucleocapsid produced during the infection cycle. The monomers are arranged in stacked rings around the nucleoprotein core. This Autographa californica nuclear polyhedrosis virus (AcMNPV) protein is Major capsid protein (P39).